The following is an 82-amino-acid chain: Cytochrome c-551 (82 aa).

Cysteine 12, cysteine 15, histidine 16, and methionine 61 together coordinate heme c.

Post-translationally, binds 1 heme c group covalently per subunit.

Functionally, this is a prokaryotic monoheme cytochrome, unreactive with mitochondrial cytochrome C oxidase or reductase. It functions in nitrite and nitrate respiration in Pseudomonas, but it is also found in other bacteria. This chain is Cytochrome c-551, found in Ectopseudomonas mendocina (Pseudomonas mendocina).